Reading from the N-terminus, the 261-residue chain is Imidazole glycerol phosphate synthase subunit HisF (261 aa).

Residues Asp16 and Asp135 contribute to the active site.

It belongs to the HisA/HisF family. As to quaternary structure, heterodimer of HisH and HisF.

The protein localises to the cytoplasm. It carries out the reaction 5-[(5-phospho-1-deoxy-D-ribulos-1-ylimino)methylamino]-1-(5-phospho-beta-D-ribosyl)imidazole-4-carboxamide + L-glutamine = D-erythro-1-(imidazol-4-yl)glycerol 3-phosphate + 5-amino-1-(5-phospho-beta-D-ribosyl)imidazole-4-carboxamide + L-glutamate + H(+). Its pathway is amino-acid biosynthesis; L-histidine biosynthesis; L-histidine from 5-phospho-alpha-D-ribose 1-diphosphate: step 5/9. Functionally, IGPS catalyzes the conversion of PRFAR and glutamine to IGP, AICAR and glutamate. The HisF subunit catalyzes the cyclization activity that produces IGP and AICAR from PRFAR using the ammonia provided by the HisH subunit. The protein is Imidazole glycerol phosphate synthase subunit HisF of Mycobacterium sp. (strain JLS).